We begin with the raw amino-acid sequence, 627 residues long: 1-deoxy-D-xylulose-5-phosphate synthase (627 aa).

Thiamine diphosphate is bound by residues H72 and 113–115; that span reads GHS. D144 lines the Mg(2+) pocket. Residues 145-146, N173, Y283, and E366 each bind thiamine diphosphate; that span reads GA. N173 lines the Mg(2+) pocket.

Belongs to the transketolase family. DXPS subfamily. As to quaternary structure, homodimer. Requires Mg(2+) as cofactor. Thiamine diphosphate is required as a cofactor.

It carries out the reaction D-glyceraldehyde 3-phosphate + pyruvate + H(+) = 1-deoxy-D-xylulose 5-phosphate + CO2. It participates in metabolic intermediate biosynthesis; 1-deoxy-D-xylulose 5-phosphate biosynthesis; 1-deoxy-D-xylulose 5-phosphate from D-glyceraldehyde 3-phosphate and pyruvate: step 1/1. Functionally, catalyzes the acyloin condensation reaction between C atoms 2 and 3 of pyruvate and glyceraldehyde 3-phosphate to yield 1-deoxy-D-xylulose-5-phosphate (DXP). This is 1-deoxy-D-xylulose-5-phosphate synthase from Macrococcus caseolyticus (strain JCSC5402) (Macrococcoides caseolyticum).